The chain runs to 1657 residues: Thrombospondin type-1 domain-containing protein 7A (1657 aa).

A signal peptide spans 1–47 (MGLQARRWASGSRGAAGPRRGVLQLLPLPLPLPLLLLLLLRPGAGRA). Residues 48-1607 (AAQGEAEAPT…FGPDGRLKTW (1560 aa)) lie on the Extracellular side of the membrane. 3 consecutive TSP type-1 domains span residues 57 to 116 (TLYL…KVCD), 120 to 192 (ELYD…IPCQ), and 194 to 247 (DCIV…SPCE). Asparagine 234 carries an N-linked (GlcNAc...) asparagine glycan. Positions 265 to 311 (MPHSRQVRQARRRGKNKEREKDRSKGVKDPEARELIKKKRNRNRQNR) are disordered. The stretch at 267–315 (HSRQVRQARRRGKNKEREKDRSKGVKDPEARELIKKKRNRNRQNRQENK) forms a coiled coil. Basic residues predominate over residues 269–280 (RQVRQARRRGKN). The segment covering 281 to 299 (KEREKDRSKGVKDPEAREL) has biased composition (basic and acidic residues). Residues 300-309 (IKKKRNRNRQ) are compositionally biased toward basic residues. Residue asparagine 332 is glycosylated (N-linked (GlcNAc...) asparagine). TSP type-1 domains follow at residues 360 to 416 (ECQV…LSQG), 423 to 510 (ATYG…IPCP), 512 to 574 (ECEV…PACY), 634 to 695 (DCVL…HPCT), 696 to 769 (VYHW…LPCK), 771 to 831 (DCIV…QACQ), 832 to 904 (SYRW…IPCQ), 906 to 959 (DCQL…CPCD), 960 to 1033 (KYNA…IPCP), 1035 to 1095 (DCKL…SDCN), 1096 to 1163 (QYLW…LPCP), 1166 to 1220 (CVIS…KNCY), 1221 to 1284 (HYDY…VECP), 1286 to 1341 (NCQL…KPCY), 1342 to 1412 (RWQY…QPCP), and 1414 to 1475 (DCYL…GQCY). 3 disulfide bridges follow: cysteine 435-cysteine 505, cysteine 455-cysteine 509, and cysteine 466-cysteine 494. A glycan (N-linked (GlcNAc...) asparagine) is linked at asparagine 450. Asparagine 500 carries N-linked (GlcNAc...) asparagine glycosylation. Disulfide bonds link cysteine 635-cysteine 677 and cysteine 646-cysteine 650. Asparagine 679 is a glycosylation site (N-linked (GlcNAc...) asparagine). 7 disulfides stabilise this stretch: cysteine 689–cysteine 694, cysteine 707–cysteine 764, cysteine 728–cysteine 768, cysteine 739–cysteine 752, cysteine 772–cysteine 814, cysteine 783–cysteine 787, and cysteine 824–cysteine 830. Residue asparagine 717 is glycosylated (N-linked (GlcNAc...) asparagine). The N-linked (GlcNAc...) asparagine glycan is linked to asparagine 968. 6 cysteine pairs are disulfide-bonded: cysteine 972-cysteine 1028, cysteine 994-cysteine 1032, cysteine 1005-cysteine 1018, cysteine 1036-cysteine 1073, cysteine 1047-cysteine 1051, and cysteine 1090-cysteine 1094. N-linked (GlcNAc...) asparagine glycosylation occurs at asparagine 1043. An N-linked (GlcNAc...) asparagine glycan is attached at asparagine 1182. A disulfide bond links cysteine 1213 and cysteine 1219. Asparagine 1225 carries an N-linked (GlcNAc...) asparagine glycan. 12 disulfides stabilise this stretch: cysteine 1232-cysteine 1279, cysteine 1240-cysteine 1283, cysteine 1251-cysteine 1264, cysteine 1287-cysteine 1325, cysteine 1298-cysteine 1302, cysteine 1335-cysteine 1340, cysteine 1351-cysteine 1407, cysteine 1358-cysteine 1411, cysteine 1369-cysteine 1388, cysteine 1415-cysteine 1459, cysteine 1426-cysteine 1430, and cysteine 1469-cysteine 1474. The N-linked (GlcNAc...) asparagine glycan is linked to asparagine 1276. Asparagine 1366 carries N-linked (GlcNAc...) asparagine glycosylation. N-linked (GlcNAc...) asparagine glycosylation is found at asparagine 1500 and asparagine 1547. Residues 1570-1591 (DVKTSRAVHPTQPSSNPAGRGR) are disordered. The helical transmembrane segment at 1608 to 1628 (VYGVAAGAFVLLIFIVSMIYL) threads the bilayer. The Cytoplasmic segment spans residues 1629–1657 (ACKKPKKPQRRQNNRLKPLTLAYDGDADM).

Post-translationally, proteolytic cleavage in the extracellular region generates a 210 kDa soluble form. Extensively N-glycosylated. As to expression, detected on kidney podocytes along the glomerular capillary wall (at protein level).

The protein localises to the cell membrane. It is found in the cell projection. The protein resides in the secreted. Its function is as follows. Plays a role in actin cytoskeleton rearrangement. In terms of biological role, the soluble form promotes endothelial cell migration and filopodia formation during sprouting angiogenesis via a FAK-dependent mechanism. This is Thrombospondin type-1 domain-containing protein 7A (THSD7A) from Homo sapiens (Human).